We begin with the raw amino-acid sequence, 224 residues long: Ribonuclease 3 (224 aa).

Residues 4-126 form the RNase III domain; sequence LDRLQHKIGY…IIGAMSLDSN (123 aa). Glu39 serves as a coordination point for Mg(2+). Asp43 is a catalytic residue. Asp112 and Glu115 together coordinate Mg(2+). Residue Glu115 is part of the active site. Residues 153-223 form the DRBM domain; it reads DPKTRLQEYL…AEQILKVLDI (71 aa).

Belongs to the ribonuclease III family. As to quaternary structure, homodimer. Requires Mg(2+) as cofactor.

The protein localises to the cytoplasm. It catalyses the reaction Endonucleolytic cleavage to 5'-phosphomonoester.. Its function is as follows. Digests double-stranded RNA. Involved in the processing of primary rRNA transcript to yield the immediate precursors to the large and small rRNAs (23S and 16S). Processes some mRNAs, and tRNAs when they are encoded in the rRNA operon. Processes pre-crRNA and tracrRNA of type II CRISPR loci if present in the organism. This Actinobacillus succinogenes (strain ATCC 55618 / DSM 22257 / CCUG 43843 / 130Z) protein is Ribonuclease 3.